The chain runs to 324 residues: UDP-N-acetylenolpyruvoylglucosamine reductase (324 aa).

The 168-residue stretch at 36–203 (FRAGGLAELM…TSVLFEGYPE (168 aa)) folds into the FAD-binding PCMH-type domain. Residue arginine 183 is part of the active site. Serine 232 acts as the Proton donor in catalysis. Glutamate 302 is a catalytic residue.

The protein belongs to the MurB family. FAD serves as cofactor.

It localises to the cytoplasm. It catalyses the reaction UDP-N-acetyl-alpha-D-muramate + NADP(+) = UDP-N-acetyl-3-O-(1-carboxyvinyl)-alpha-D-glucosamine + NADPH + H(+). The protein operates within cell wall biogenesis; peptidoglycan biosynthesis. In terms of biological role, cell wall formation. The chain is UDP-N-acetylenolpyruvoylglucosamine reductase from Rhizobium etli (strain CIAT 652).